The chain runs to 342 residues: MGSISPKTRFPIVLGAGLIGSPGLFEGATVTTVKDVEALLDTFQAHGHTDVDVARIYGSGSAETLLAAADWKGRGLVVRDKLYPTKRRPMAHLGTAYTLEPADVRRGLLDCLKALNTPKLDLFILYAPDRQVPVEETLREVNKLYEEGLFSRLGISNYMAWEVVQIMELCEKNAWVKPSLYQSLYNVLHRAIEPELVPCLRAYNLPLHVGQPLCGGFLTSRYRRDMPESEHKPGSRFDPQTFHGRHHRHRYWNDAYFDVLDTIRETGRKYNLTEVQCALRWLSHHSLLRPECGDAILVCGSDPAQLEEDLLALEEPPLPEEVVQVLDEGYAKVKAVVGPYYH.

Residues 1–27 form the signal peptide; it reads MGSISPKTRFPIVLGAGLIGSPGLFEG. D52 lines the NADP(+) pocket. Y57 acts as the Proton donor in catalysis. The NADP(+) site is built by Q182 and R236. N271 is a glycosylation site (N-linked (GlcNAc...) asparagine).

Belongs to the aldo/keto reductase family. Aldo/keto reductase 2 subfamily.

It participates in secondary metabolite biosynthesis. Its function is as follows. Aldo-keto reductase; part of the gene cluster that mediates the biosynthesis of azaphilone pigments (MonAzPs), a complex mixture of compounds with a common azaphilone skeleton very widely used as food colorants. Within the pathway, pigE is involved in the dehydration of the C-11 alcohol followed by the reduction of the C6(7) double bond which increases the electrophilicity of the C-5 ketone of the resulting acyl benzopyran and allows the intramolecular Knoevenagel aldol condensation with the C-20 enol of the side chain to yield the characteristic linear tricyclic carbon skeletons of the yellow pigments. The first step of the pathway is performed by the nrPKS pigA that forms the hexaketide precursor from successive condensations of five malonyl-CoA units, with a simple acetyl-CoA starter unit. The role of esterase pigG is not clear, but it may play at most a supplementary role in the formation of the benzaldehyde produced by the pigA nrPKS. This very reactive benzaldehyde is intercepted by the pigC ketoreductase that to provide the first stable enzyme-free MonAzPs intermediate, 6-(4-hydroxy-2-oxopentyl)-3-methyl-2,4-dioxocyclohexane carbaldehyde, also known as M7PKS-1. The FAD-dependent monooxygenase pigN hydroxylates M7PKS-1 at C-4, which triggers the formation of the pyran ring. PigJ, pigK and pigD are involved in the acetylation of the pyran ring. PigJ and pigK form the two subunits of a dedicated fungal FAS that produces the side chain fatty acyl moiety of MonAzPs and pigD transfers the fatty acyl chain to the C-4 alcohol. PigM and pigO are involved in the elimination of the omega-1 alcohol. PigM acts as an O-acetyltransferase that synthesizes the putative O-11 acetyl intermediate whereas pigO eliminates acetic acid to yield an intermediate with a C10(11) double bond. The dehydration of the C-11 alcohol followed by the reduction of the C6(7) double bond by the NAD(P)H-dependent oxidoreductase pigE increases the electrophilicity of the C-5 ketone of the resulting acyl benzopyran. This in turn sets up the C-5 ketone for an intramolecular Knoevenagel aldol condensation with the C-20 enol of the side chain. This condensation affords the characteristic linear tricyclic carbon skeletons of the yellow pigments that serve as the common precursors for the classical yellow pigments monascin and ankaflavin, orange pigments rubopunctatin and monascorubrin, and red pigments ribropunctamine and monascorubramine. The FAD-dependent oxidoreductase pigF is especially invoved in the biosynthesis of orange and red pigments via desaturation of C6(7). The chain is Aldo-keto reductase pigE from Monascus ruber (Mold).